Consider the following 602-residue polypeptide: Elongation factor 4 (602 aa).

Residues 7-189 (RKIRNFSIIA…AIVKNIPPPT (183 aa)) enclose the tr-type G domain. GTP is bound by residues 19-24 (DHGKST) and 136-139 (NKID).

This sequence belongs to the TRAFAC class translation factor GTPase superfamily. Classic translation factor GTPase family. LepA subfamily.

The protein resides in the cell membrane. The catalysed reaction is GTP + H2O = GDP + phosphate + H(+). In terms of biological role, required for accurate and efficient protein synthesis under certain stress conditions. May act as a fidelity factor of the translation reaction, by catalyzing a one-codon backward translocation of tRNAs on improperly translocated ribosomes. Back-translocation proceeds from a post-translocation (POST) complex to a pre-translocation (PRE) complex, thus giving elongation factor G a second chance to translocate the tRNAs correctly. Binds to ribosomes in a GTP-dependent manner. This chain is Elongation factor 4, found in Alkaliphilus metalliredigens (strain QYMF).